The sequence spans 161 residues: Large ribosomal subunit protein bL21m (161 aa).

A mitochondrion-targeting transit peptide spans 1–35; that stretch reads MLQLKFIWPVARITPIYRPFTSHPFRNLATSSSIS.

It belongs to the bacterial ribosomal protein bL21 family. As to quaternary structure, component of the mitochondrial large ribosomal subunit (mt-LSU). Mature yeast 74S mitochondrial ribosomes consist of a small (37S) and a large (54S) subunit. The 37S small subunit contains a 15S ribosomal RNA (15S mt-rRNA) and 34 different proteins. The 54S large subunit contains a 21S rRNA (21S mt-rRNA) and 46 different proteins.

The protein resides in the mitochondrion. Functionally, component of the mitochondrial ribosome (mitoribosome), a dedicated translation machinery responsible for the synthesis of mitochondrial genome-encoded proteins, including at least some of the essential transmembrane subunits of the mitochondrial respiratory chain. The mitoribosomes are attached to the mitochondrial inner membrane and translation products are cotranslationally integrated into the membrane. This chain is Large ribosomal subunit protein bL21m (MRPL49), found in Saccharomyces cerevisiae (strain ATCC 204508 / S288c) (Baker's yeast).